We begin with the raw amino-acid sequence, 213 residues long: Phosphatidylserine decarboxylase proenzyme (213 aa).

Serine 180 (schiff-base intermediate with substrate; via pyruvic acid) is an active-site residue. Position 180 is a pyruvic acid (Ser); by autocatalysis (serine 180).

Belongs to the phosphatidylserine decarboxylase family. PSD-A subfamily. Heterodimer of a large membrane-associated beta subunit and a small pyruvoyl-containing alpha subunit. The cofactor is pyruvate. In terms of processing, is synthesized initially as an inactive proenzyme. Formation of the active enzyme involves a self-maturation process in which the active site pyruvoyl group is generated from an internal serine residue via an autocatalytic post-translational modification. Two non-identical subunits are generated from the proenzyme in this reaction, and the pyruvate is formed at the N-terminus of the alpha chain, which is derived from the carboxyl end of the proenzyme. The post-translation cleavage follows an unusual pathway, termed non-hydrolytic serinolysis, in which the side chain hydroxyl group of the serine supplies its oxygen atom to form the C-terminus of the beta chain, while the remainder of the serine residue undergoes an oxidative deamination to produce ammonia and the pyruvoyl prosthetic group on the alpha chain.

It localises to the cell membrane. The enzyme catalyses a 1,2-diacyl-sn-glycero-3-phospho-L-serine + H(+) = a 1,2-diacyl-sn-glycero-3-phosphoethanolamine + CO2. Its pathway is phospholipid metabolism; phosphatidylethanolamine biosynthesis; phosphatidylethanolamine from CDP-diacylglycerol: step 2/2. Functionally, catalyzes the formation of phosphatidylethanolamine (PtdEtn) from phosphatidylserine (PtdSer). The polypeptide is Phosphatidylserine decarboxylase proenzyme (Carboxydothermus hydrogenoformans (strain ATCC BAA-161 / DSM 6008 / Z-2901)).